A 328-amino-acid polypeptide reads, in one-letter code: GMP reductase (328 aa).

The Thioimidate intermediate role is filled by cysteine 176. 205 to 228 is a binding site for NADP(+); it reads IIADGGIRTHGDIAKSIRFGASMI.

The protein belongs to the IMPDH/GMPR family. GuaC type 2 subfamily.

The enzyme catalyses IMP + NH4(+) + NADP(+) = GMP + NADPH + 2 H(+). In terms of biological role, catalyzes the irreversible NADPH-dependent deamination of GMP to IMP. It functions in the conversion of nucleobase, nucleoside and nucleotide derivatives of G to A nucleotides, and in maintaining the intracellular balance of A and G nucleotides. The polypeptide is GMP reductase (Streptococcus pneumoniae (strain CGSP14)).